The chain runs to 155 residues: Riboflavin kinase (155 aa).

ATP is bound by residues glycine 15, lysine 21, threonine 27, and asparagine 29. Residues threonine 27 and asparagine 29 each contribute to the Mg(2+) site. Glutamate 79 acts as the Nucleophile in catalysis. ATP contacts are provided by isoleucine 82, histidine 84, and tyrosine 91. Arginine 104, lysine 107, and phenylalanine 109 together coordinate FMN.

As to quaternary structure, monomer. Directly interacts with TNFRSF1A death domain. TNFRSF1A-binding may be supported by TRADD. In the absence of TNFRSF1A, interacts with TRADD. Independently of TNFRSF1A, interacts with the NADPH oxidase subunit CYBA. It depends on Zn(2+) as a cofactor. Mg(2+) serves as cofactor. As to expression, detected in brain, placenta and urinary bladder.

The protein resides in the cytoplasm. The catalysed reaction is riboflavin + ATP = FMN + ADP + H(+). Its pathway is cofactor biosynthesis; FMN biosynthesis; FMN from riboflavin (ATP route): step 1/1. In terms of biological role, catalyzes the phosphorylation of riboflavin (vitamin B2) to form flavin-mononucleotide (FMN), hence rate-limiting enzyme in the synthesis of FAD. Essential for TNF-induced reactive oxygen species (ROS) production. Through its interaction with both TNFRSF1A and CYBA, physically and functionally couples TNFRSF1A to NADPH oxidase. TNF-activation of RFK may enhance the incorporation of FAD in NADPH oxidase, a critical step for the assembly and activation of NADPH oxidase. The polypeptide is Riboflavin kinase (RFK) (Homo sapiens (Human)).